Consider the following 61-residue polypeptide: Large ribosomal subunit protein uL30 (61 aa).

Belongs to the universal ribosomal protein uL30 family. As to quaternary structure, part of the 50S ribosomal subunit.

This is Large ribosomal subunit protein uL30 from Rhizorhabdus wittichii (strain DSM 6014 / CCUG 31198 / JCM 15750 / NBRC 105917 / EY 4224 / RW1) (Sphingomonas wittichii).